Consider the following 435-residue polypeptide: MDQEIEIPSFFLCPISLDIMKDPVIVSTGITYDRESIEKWLFSGKKNSCPVTKQVITETDLTPNHTLRRLIQSWCTLNASYGIERIPTPKPPICKSEIEKLIKESSSSHLNQVKCLKRLRQIVSENTTNKRCLEAAEVPEFLANIVSNSVDTYNSPSSSLSSSNLNDMCQSNMLENRFDSSRSLMDEALSVLYHLDTSETALKSLLNNKKGTNLVKTLTKIMQRGIYESRAYAALLLKKLLEVADPMQIILLERELFGEVIQILHDQISHKATRSAMQILVITCPWGRNRHKAVEGGTISMIIELLMDDTFSSERRNSEMAMVVLDMLCQCAEGRAEFLNHGAAIAVVSKKILRVSQITSERAVRVLLSVGRFCATPSLLQEMLQLGVVAKLCLVLQVSCGNKTKEKAKELLKLHARVWRESPCVPRNLYDSYPA.

In terms of domain architecture, U-box spans 6–81 (EIPSFFLCPI…QSWCTLNASY (76 aa)).

As to quaternary structure, interacts with RPN12A. Binds to EXO70B2. Auto-ubiquitinated leading to degradation via the 26S proteasome. This Auto-ubiquitination is repressed by the bacterial elicitor flg22 thus leading to a transiently increased protein stabilization and accumulation.

The protein resides in the cytoplasm. The catalysed reaction is S-ubiquitinyl-[E2 ubiquitin-conjugating enzyme]-L-cysteine + [acceptor protein]-L-lysine = [E2 ubiquitin-conjugating enzyme]-L-cysteine + N(6)-ubiquitinyl-[acceptor protein]-L-lysine.. It participates in protein modification; protein ubiquitination. E3 ubiquitin-protein ligase that negatively regulates water stress response. May control in coordination with PUB23 a drought signaling pathway by ubiquitinating cytosolic RPN12a. Acts as a negative regulator of the immunity triggered by the pathogen-associated molecular patterns (PAMPs), in association with PUB23 and PUB24. Regulates EXO70B2 ubiquitination and degradation via the 26S proteasome to attenuate PAMP-induced signaling. In Arabidopsis thaliana (Mouse-ear cress), this protein is E3 ubiquitin-protein ligase PUB22.